Reading from the N-terminus, the 335-residue chain is N-acetyl-gamma-glutamyl-phosphate reductase (335 aa).

Cys-156 is a catalytic residue.

The protein belongs to the NAGSA dehydrogenase family. Type 1 subfamily.

It is found in the cytoplasm. The catalysed reaction is N-acetyl-L-glutamate 5-semialdehyde + phosphate + NADP(+) = N-acetyl-L-glutamyl 5-phosphate + NADPH + H(+). It functions in the pathway amino-acid biosynthesis; L-arginine biosynthesis; N(2)-acetyl-L-ornithine from L-glutamate: step 3/4. Functionally, catalyzes the NADPH-dependent reduction of N-acetyl-5-glutamyl phosphate to yield N-acetyl-L-glutamate 5-semialdehyde. The chain is N-acetyl-gamma-glutamyl-phosphate reductase from Aeromonas salmonicida (strain A449).